The primary structure comprises 102 residues: MESQNIRIRLKAFDHRVLDQSTSEIVNTAKRTGARVRGPIPLPTQIEKFTVNRSPHIDKKSREQFEIRTHKRLLDIVDPTPQTVDALMKLDLAAGVDVEIKI.

Belongs to the universal ribosomal protein uS10 family. As to quaternary structure, part of the 30S ribosomal subunit.

Its function is as follows. Involved in the binding of tRNA to the ribosomes. In Rhodospirillum centenum (strain ATCC 51521 / SW), this protein is Small ribosomal subunit protein uS10.